The chain runs to 334 residues: Triplex capsid protein 1 (334 aa).

Belongs to the herpesviridae TRX1 protein family. Interacts with TRX2, MCP and capsid vertex component 2/CVC2.

It is found in the virion. The protein localises to the host nucleus. Structural component of the T=16 icosahedral capsid. The capsid is composed of pentamers and hexamers of major capsid protein/MCP, which are linked together by heterotrimers called triplexes. These triplexes are formed by a single molecule of triplex protein 1/TRX1 and two copies of triplex protein 2/TRX2. Additionally, TRX1 is required for efficient transport of TRX2 to the nucleus, which is the site of capsid assembly. The polypeptide is Triplex capsid protein 1 (Connochaetes taurinus (Blue wildebeest)).